The sequence spans 105 residues: Class I hydrophobin 1 (105 aa).

Positions 1 to 17 (MQFTSFAILAISAVASA) are cleaved as a signal peptide. Disulfide bonds link cysteine 36–cysteine 85, cysteine 44–cysteine 78, cysteine 45–cysteine 63, and cysteine 86–cysteine 100. N-linked (GlcNAc...) asparagine glycosylation is found at asparagine 48, asparagine 67, and asparagine 97.

This sequence belongs to the fungal hydrophobin family. As to quaternary structure, self-assembles to form functional amyloid fibrils called rodlets. Self-assembly into fibrillar rodlets occurs spontaneously at hydrophobic:hydrophilic interfaces and the rodlets further associate laterally to form amphipathic monolayers. As to expression, abundant on conidia and aerial structures formed in vitro and emerging from disease lesions on infected tomato plants.

It localises to the secreted. The protein resides in the cell wall. Its function is as follows. Aerial growth, conidiation, and dispersal of filamentous fungi in the environment rely upon a capability of their secreting small amphipathic proteins called hydrophobins (HPBs) with low sequence identity. Class I can self-assemble into an outermost layer of rodlet bundles on aerial cell surfaces, conferring cellular hydrophobicity that supports fungal growth, development and dispersal; whereas Class II form highly ordered films at water-air interfaces through intermolecular interactions but contribute nothing to the rodlet structure. Hcf-1 is a class I hydrophobin that is not necessary for the development of hyphae or conidia but acts as the main determinant of conidium hydrophobicity and, thus, is required for efficient water-mediated dispersal of conidia. Forms a component of the rodlet layer, but other hydrophobins must also participate in this proces. The polypeptide is Class I hydrophobin 1 (Passalora fulva (Tomato leaf mold)).